Here is a 140-residue protein sequence, read N- to C-terminus: Pro-Viral epidermal growth factor (140 aa).

An N-terminal signal peptide occupies residues 1–18; that stretch reads MSMKYLMLLFAAMIIRSF. Residues 19–100 lie on the Extracellular side of the membrane; sequence ADSGNAIETT…SENPNTTTSY (82 aa). The N-linked (GlcNAc...) asparagine; by host glycan is linked to Asn-34. The EGF-like domain occupies 41 to 81; sequence AIRLCGPEGDGYCLHGDCIHARDIDGMYCRCSHGYTGIRCQ. Disulfide bonds link Cys-45–Cys-58, Cys-53–Cys-69, and Cys-71–Cys-80. A glycan (N-linked (GlcNAc...) asparagine; by host) is linked at Asn-95. A helical membrane pass occupies residues 101–121; that stretch reads IPSPGIMLVLVGIIIITCCLL. Over 122-140 the chain is Cytoplasmic; the sequence is SVYRFTRRTKLPIQDMVVP.

Belongs to the orthopoxvirus OPG019 family. As to quaternary structure, viral epidermal growth factor interacts with host EGFR and promotes EGFR dimerization. Cleaved at the cell surface by host ADAM10, thereby releasing the secreted form of VGF.

The protein resides in the host membrane. Its subcellular location is the secreted. Stimulates cellular proliferation (hyperplasia)and mobility around infected cells to promote rapid and efficient spread of infection. This effect is beneficial for virus replication in vivo, because poxviruses replicate possibly better in proliferating cells than in quiescent cells. Acts by binding host EGFR, inducing its dimerization, autophosphorylation and leading to activation of several cellular pathways regulating cell proliferation or cell survival. The activation by host EGFR of mitogen activated protein kinases (MAPK) and extracellular-signal regulated kinases (ERK) are essential for the positive effect of vaccinia growth factor on poxvirus virulence in vivo. The protein is Pro-Viral epidermal growth factor (OPG019) of Bos taurus (Bovine).